The primary structure comprises 60 residues: MAVPARRTSKAKKNKRRTHYKVAAPTVKFDETTGDYSRSHRVSLKGYYKGRKIAKAASAE.

The protein belongs to the bacterial ribosomal protein bL32 family.

In Streptococcus suis (strain 05ZYH33), this protein is Large ribosomal subunit protein bL32.